The chain runs to 61 residues: MPIINVKLLEGRSDEQLKDLVTEVTHAVEKTTGANKEAIHVVIEEMRKDHYAVGGVRKSDQ.

Pro2 acts as the Proton acceptor; via imino nitrogen in catalysis.

This sequence belongs to the 4-oxalocrotonate tautomerase family.

The polypeptide is Probable tautomerase SERP0934 (Staphylococcus epidermidis (strain ATCC 35984 / DSM 28319 / BCRC 17069 / CCUG 31568 / BM 3577 / RP62A)).